The sequence spans 414 residues: Alanine--glyoxylate aminotransferase (414 aa).

The transit peptide at 1–23 directs the protein to the mitochondrion; that stretch reads MFRMLAKASVTLGSRAASWVRNM. At Lys231 the chain carries N6-(pyridoxal phosphate)lysine. An N6-acetyllysine; alternate modification is found at Lys247. Position 247 is an N6-succinyllysine; alternate (Lys247). 2 positions are modified to N6-acetyllysine: Lys256 and Lys334. Arg382 serves as a coordination point for substrate. A Microbody targeting signal motif is present at residues 412–414; the sequence is NKL.

It belongs to the class-V pyridoxal-phosphate-dependent aminotransferase family. As to quaternary structure, homodimer. Requires pyridoxal 5'-phosphate as cofactor.

The protein localises to the peroxisome. Its subcellular location is the mitochondrion matrix. The catalysed reaction is L-serine + pyruvate = 3-hydroxypyruvate + L-alanine. It catalyses the reaction glyoxylate + L-alanine = glycine + pyruvate. Functionally, catalyzes the transamination of glyoxylate to glycine and contributes to the glyoxylate detoxification. Its function is as follows. Catalyzes the transamination between L-serine and pyruvate and weakly contributes to gluconeogenesis from the L-serine metabolism. The chain is Alanine--glyoxylate aminotransferase from Rattus norvegicus (Rat).